We begin with the raw amino-acid sequence, 289 residues long: Serine/threonine-protein phosphatase Pgam5, mitochondrial (289 aa).

A helical membrane pass occupies residues phenylalanine 7–leucine 23.

It belongs to the phosphoglycerate mutase family. BPG-dependent PGAM subfamily. Interacts with Pk92B/ASK1.

Its subcellular location is the mitochondrion outer membrane. The enzyme catalyses O-phospho-L-seryl-[protein] + H2O = L-seryl-[protein] + phosphate. It catalyses the reaction O-phospho-L-threonyl-[protein] + H2O = L-threonyl-[protein] + phosphate. Functionally, displays phosphatase activity for serine/threonine residues, and dephosphorylates and activates Pk92B kinase. Has apparently no phosphoglycerate mutase activity. The chain is Serine/threonine-protein phosphatase Pgam5, mitochondrial (Pgam5) from Drosophila pseudoobscura pseudoobscura (Fruit fly).